The primary structure comprises 172 residues: Envelope protein UL45 (172 aa).

The Intravirion portion of the chain corresponds to 1-27; it reads MPLRASEHAYRPLGPGTPPVRARLPAA. The helical; Signal-anchor for type II membrane protein transmembrane segment at 28–48 threads the bilayer; sequence AWVGVGTIIGGVVIIAALVLV. Residues 49–172 are Virion surface-facing; that stretch reads PSRASWALSP…TSTRNALGLP (124 aa).

Belongs to the herpesviridae HHV-1 UL45 family.

It localises to the virion membrane. Important virulence factor of HSV neurotropism. Seems to be required for glycoprotein B-induced fusion. Dispensable for growth in vitro. The protein is Envelope protein UL45 of Homo sapiens (Human).